Reading from the N-terminus, the 104-residue chain is Replication restart protein PriB (104 aa).

One can recognise an SSB domain in the interval 1 to 101; it reads MTNRLVLSGT…LHAEQIDLID (101 aa).

This sequence belongs to the PriB family. In terms of assembly, homodimer. Interacts with PriA and DnaT. Component of the replication restart primosome. Primosome assembly occurs via a 'hand-off' mechanism. PriA binds to replication forks, subsequently PriB then DnaT bind; DnaT then displaces ssDNA to generate the helicase loading substrate.

In terms of biological role, involved in the restart of stalled replication forks, which reloads the replicative helicase on sites other than the origin of replication; the PriA-PriB pathway is the major replication restart pathway. During primosome assembly it facilitates complex formation between PriA and DnaT on DNA; stabilizes PriA on DNA. Stimulates the DNA unwinding activity of PriA helicase. This is Replication restart protein PriB from Enterobacter sp. (strain 638).